We begin with the raw amino-acid sequence, 177 residues long: MLSEVNKISKNFAINQEIREKEVRLISSTGEQLGVVSGRDAQRMADEAELDLVMISPNAKPPVCKIMDYGKFIYEQSKKEKEAKKKQKVISVKEIRVSPTIEKHDLEIKAKNAKKFLEAGDKVKITVRFRGREAEHSHVGVKILDSFLAQLEEVCSVEKPAKLEGRNMIMILAPKKA.

This sequence belongs to the IF-3 family. In terms of assembly, monomer.

It localises to the cytoplasm. IF-3 binds to the 30S ribosomal subunit and shifts the equilibrium between 70S ribosomes and their 50S and 30S subunits in favor of the free subunits, thus enhancing the availability of 30S subunits on which protein synthesis initiation begins. The chain is Translation initiation factor IF-3 from Clostridium perfringens (strain 13 / Type A).